Here is a 340-residue protein sequence, read N- to C-terminus: MKAAVVTKDHRVSIEEKRLRELRPGEALVKTEYCGVCHTDLHVKNADFGDVTGVTLGHEGIGRVIKIADNVDSLKVGDRVSIAWMYAACGNCEYCTTGRETLCRDVLNAGYTVDGAMAEEVIVDANYAVKVPENLDPAAASSITCAGVTTYKAVKVSGIEPGQWLGVFGVGGLGNLALQYAKNVMGAKVVAFDINDDKLNFAKELGADAIINSTNVDPIEEVNRLTNNKGLDATVITAVAKTPFNQAVDVVKAGARVVAVGLPVDKMDLDIPRLVLDGIEVVGSLVGTRQDLREAFQFAAENKVIPKIQLRQLSEINDIFDEMEKGTITGRMVIDMKSTH.

Zn(2+)-binding residues include C37, H58, C89, C92, C95, C103, and C145.

The protein belongs to the zinc-containing alcohol dehydrogenase family. Zn(2+) is required as a cofactor.

The catalysed reaction is a primary alcohol + NAD(+) = an aldehyde + NADH + H(+). It carries out the reaction a secondary alcohol + NAD(+) = a ketone + NADH + H(+). This chain is Alcohol dehydrogenase (adh), found in Staphylococcus epidermidis (strain ATCC 12228 / FDA PCI 1200).